The primary structure comprises 416 residues: MTVPFKIPISDLDYCLEQLLDHKPPKILPPETIQQLCHTLKTELLQTPNIISLQSPISVVGDIHGQYHDLLEIFQIGGSPPQTNYLFLGDYVDRGYYSVETISLLLVLKLRYPERVFLIRGNHESRTITTNYGFYTEVLNKYQGSADVWTFITDLFDYLPLGATIDGKIFACHGGLSPSCQQLDQIRAVDRFREIPHDGIMADLVWSDPDVAISDFKLSPRGAGYLFGNDVIDKFCQDNNLVQMIRAHQLCNEGYTSYWKGKCLTVWSAPNYCYRCGNKASVLEILHSNYDSKDPTNGSDGEISSINGEFIGVNTSFESFGDDDDDYNDYRNRFNNSSRLHKQQGVLPGQFFNVFEASKENDEDTLQGKSVNGINFDDELSTSDDTSGSGGNNNKGDFFAAFFQERPKRQQVEYFL.

Residues Asp-62, His-64, Asp-90, and Asn-122 each contribute to the Mn(2+) site. His-123 (proton donor) is an active-site residue. 2 residues coordinate Mn(2+): His-173 and His-248. Residues 363–391 (EDTLQGKSVNGINFDDELSTSDDTSGSGG) form a disordered region.

Belongs to the PPP phosphatase family. PP-2A subfamily. The cofactor is Mn(2+).

It catalyses the reaction O-phospho-L-seryl-[protein] + H2O = L-seryl-[protein] + phosphate. It carries out the reaction O-phospho-L-threonyl-[protein] + H2O = L-threonyl-[protein] + phosphate. Its activity is regulated as follows. Inhibited by okadaic acid, a specific inhibitor of serine/threonine phosphatases of types 1, 2A and 2B. Its function is as follows. Serine/threonine-protein phosphatase that plays an important role in controlling colony morphology, filament extension and agar invasion. Down-regulates expression of NRG1 and affects the expression of multiple filament-specific transcripts in response to serum and 37 degrees Celsius. Plays a crucial role in virulence in a mouse model of systemic candidiasis. The chain is Serine/threonine-protein phosphatase PP2A-like PPG1 from Candida albicans (strain SC5314 / ATCC MYA-2876) (Yeast).